The following is a 476-amino-acid chain: Eukaryotic translation initiation factor 3 subunit L (476 aa).

The region spanning 257-452 (DAIRMFSHIL…DLDYALENDL (196 aa)) is the PCI domain.

Belongs to the eIF-3 subunit L family. In terms of assembly, component of the eukaryotic translation initiation factor 3 (eIF-3) complex.

It is found in the cytoplasm. In terms of biological role, component of the eukaryotic translation initiation factor 3 (eIF-3) complex, which is involved in protein synthesis of a specialized repertoire of mRNAs and, together with other initiation factors, stimulates binding of mRNA and methionyl-tRNAi to the 40S ribosome. The eIF-3 complex specifically targets and initiates translation of a subset of mRNAs involved in cell proliferation. In Aspergillus fumigatus (strain CBS 144.89 / FGSC A1163 / CEA10) (Neosartorya fumigata), this protein is Eukaryotic translation initiation factor 3 subunit L.